Consider the following 110-residue polypeptide: DNA-directed RNA polymerase subunit omega (110 aa).

The protein belongs to the RNA polymerase subunit omega family. The RNAP catalytic core consists of 2 alpha, 1 beta, 1 beta' and 1 omega subunit. When a sigma factor is associated with the core the holoenzyme is formed, which can initiate transcription.

It catalyses the reaction RNA(n) + a ribonucleoside 5'-triphosphate = RNA(n+1) + diphosphate. In terms of biological role, promotes RNA polymerase assembly. Latches the N- and C-terminal regions of the beta' subunit thereby facilitating its interaction with the beta and alpha subunits. The sequence is that of DNA-directed RNA polymerase subunit omega (rpoZ) from Mycobacterium bovis (strain ATCC BAA-935 / AF2122/97).